A 367-amino-acid polypeptide reads, in one-letter code: Alanine racemase (367 aa).

The active-site Proton acceptor; specific for D-alanine is the lysine 40. Residue lysine 40 is modified to N6-(pyridoxal phosphate)lysine. Arginine 136 contributes to the substrate binding site. The active-site Proton acceptor; specific for L-alanine is tyrosine 263. Methionine 310 contacts substrate.

Belongs to the alanine racemase family. Pyridoxal 5'-phosphate is required as a cofactor.

It carries out the reaction L-alanine = D-alanine. The protein operates within amino-acid biosynthesis; D-alanine biosynthesis; D-alanine from L-alanine: step 1/1. Its function is as follows. Catalyzes the interconversion of L-alanine and D-alanine. May also act on other amino acids. The protein is Alanine racemase (alr) of Streptococcus pneumoniae (strain Hungary19A-6).